The chain runs to 389 residues: Nicotinamide-nucleotide adenylyltransferase (389 aa).

Positions 380 to 383 match the Nuclear localization signal motif; the sequence is KKQK.

It belongs to the eukaryotic NMN adenylyltransferase family. Abundantly expressed in neuronal and muscle cells. Present at relatively low levels at the neuromuscular junction. Expressed in the eye; present in photoreceptor cells and various neurons in the lamina cortex and medulla cortex and at low levels in the lamina.

It is found in the nucleus. The protein localises to the cytoplasm. The protein resides in the presynaptic active zone. It catalyses the reaction beta-nicotinamide D-ribonucleotide + ATP + H(+) = diphosphate + NAD(+). The catalysed reaction is nicotinate beta-D-ribonucleotide + ATP + H(+) = deamido-NAD(+) + diphosphate. It functions in the pathway cofactor biosynthesis; NAD(+) biosynthesis; NAD(+) from nicotinamide D-ribonucleotide: step 1/1. It participates in cofactor biosynthesis; NAD(+) biosynthesis; deamido-NAD(+) from nicotinate D-ribonucleotide: step 1/1. In terms of biological role, catalyzes the formation of NAD(+) from nicotinamide mononucleotide (NMN) and ATP. Essential for viability. Stress-response chaperone protein that prevents toxic aggregation of proteins and promotes proteasome-mediated degradation of misfolded proteins; this is independent of its NAD(+) synthesis activity. Neuroprotective in response to toxic protein aggregation, for example by overexpressed Atx-1/ataxin-1. Required for maintenance and integrity of mature neurons, protecting them from neuronal activity-induced neurodegeneration. Required for the maintenance of axonal and dendritic integrity in both central and peripheral neurons. Chaperone function and neuroprotective roles are largely independent of NAD(+) synthesis activity. Its function is as follows. Catalyzes the formation of NAD(+) from nicotinamide mononucleotide (NMN) and ATP. Has, or stimulates, chaperone holdase activity but not refoldase activity. Does not have neuroprotective properties and may stimulate apoptosis and neurodegeneration in response to toxic protein aggregates. Catalyzes the formation of NAD(+) from nicotinamide mononucleotide (NMN) and ATP. Has, or stimulates, chaperone holdase and refoldase activity. Neuroprotective and reduces the toxic load of protein aggregates, preventing apoptosis and neurodegeneration. Promotes clearance of nuclear misfolded protein aggregates. This is Nicotinamide-nucleotide adenylyltransferase from Drosophila melanogaster (Fruit fly).